We begin with the raw amino-acid sequence, 112 residues long: Probable fatty acid-binding protein (112 aa).

The protein belongs to the calycin superfamily. Fatty-acid binding protein (FABP) family.

This chain is Probable fatty acid-binding protein, found in Anopheles gambiae (African malaria mosquito).